The chain runs to 593 residues: Tyrosine-protein phosphatase non-receptor type 11 (593 aa).

Threonine 2 carries the post-translational modification N-acetylthreonine. SH2 domains follow at residues 6 to 102 and 112 to 216; these read WFHP…KYPL and WFHG…KQPL. A phosphotyrosine mark is found at tyrosine 62 and tyrosine 66. The region spanning 247–521 is the Tyrosine-protein phosphatase domain; the sequence is FWEEFETLQQ…RFIYMAVQHY (275 aa). Substrate contacts are provided by residues aspartate 425, 459-465, and glutamine 506; that span reads CSAGIGR. Catalysis depends on cysteine 459, which acts as the Phosphocysteine intermediate. Residues tyrosine 542 and tyrosine 580 each carry the phosphotyrosine; by PDGFR modification.

Belongs to the protein-tyrosine phosphatase family. Non-receptor class 2 subfamily. As to quaternary structure, interacts with CD84 and with phosphorylated SIT1 and MZPL1. Interacts with FCRL4, FCRL6 and ANKHD1. Interacts with GAREM1 (tyrosine phosphorylated); the interaction increases MAPK/ERK activity and does not affect the GRB2/SOS complex formation. Interacts with PTPNS1 and BCAR3. Interacts with phosphorylated LIME1. Interacts with SHB and INPP5D/SHIP1. Interacts with KIR2DL1; the interaction is enhanced by ARRB2. Interacts with GAB2. Interacts with TERT; the interaction retains TERT in the nucleus. Interacts with PECAM1 and FER. Interacts with EPHA2 (activated); participates in PTK2/FAK1 dephosphorylation in EPHA2 downstream signaling. Interacts with MILR1 (tyrosine phosphorylated). Interacts with FLT1 (tyrosine-phosphorylated), FLT3 (tyrosine-phosphorylated), FLT4 (tyrosine-phosphorylated), KIT and GRB2. Interacts with ROS1; mediates PTPN11 phosphorylation. Interacts with PDGFRA (tyrosine phosphorylated). Interacts with PDGFRB (tyrosine phosphorylated); this interaction increases the PTPN11 phosphatase activity. Interacts (via SH2 domain) with TEK/TIE2 (tyrosine phosphorylated). Interacts with CEACAM1 (via cytoplasmic domain); this interaction depends on the monomer/dimer equilibrium and is phosphorylation-dependent. Interacts with MPIG6B (via ITIM motif). Interacts with SIGLEC10. Interacts with Lilrb4a (when tyrosine phosphorylated). Interacts with SIGLEC10. Interacts with CLEC12B (via ITIM motif); this interaction triggers dephosphorylation and activation of PTPN11. Interacts (via SH2 domains) with NEDD9/CAS-L; the interaction is enhanced when NEDD9/CAS-L is tyrosine phosphorylated. Interacts with PIRB; when PIRB is phosphorylated by LYN at 'Tyr-794' and 'Tyr-824'. Phosphorylated on Tyr-542 and Tyr-580 upon receptor protein tyrosine kinase activation; which creates a binding site for GRB2 and other SH2-containing proteins. Phosphorylated upon activation of the receptor-type kinase FLT3. Phosphorylated by activated PDGFRB. Phosphorylated upon activation of the receptor-type kinase PDGFRA. In terms of tissue distribution, highly expressed in brain, heart and kidney.

It is found in the cytoplasm. It carries out the reaction O-phospho-L-tyrosyl-[protein] + H2O = L-tyrosyl-[protein] + phosphate. In terms of biological role, acts downstream of various receptor and cytoplasmic protein tyrosine kinases to participate in the signal transduction from the cell surface to the nucleus. Positively regulates MAPK signal transduction pathway. Dephosphorylates GAB1, ARHGAP35 and EGFR. Dephosphorylates ROCK2 at 'Tyr-722' resulting in stimulation of its RhoA binding activity. Dephosphorylates CDC73. Dephosphorylates SOX9 on tyrosine residues, leading to inactivate SOX9 and promote ossification. Dephosphorylates tyrosine-phosphorylated NEDD9/CAS-L. The chain is Tyrosine-protein phosphatase non-receptor type 11 (Ptpn11) from Mus musculus (Mouse).